A 458-amino-acid chain; its full sequence is V-type ATP synthase beta chain (458 aa).

The protein belongs to the ATPase alpha/beta chains family.

Produces ATP from ADP in the presence of a proton gradient across the membrane. The V-type beta chain is a regulatory subunit. This is V-type ATP synthase beta chain from Enterococcus faecalis (strain ATCC 700802 / V583).